A 99-amino-acid polypeptide reads, in one-letter code: Integration host factor subunit alpha (99 aa).

Belongs to the bacterial histone-like protein family. Heterodimer of an alpha and a beta chain.

This protein is one of the two subunits of integration host factor, a specific DNA-binding protein that functions in genetic recombination as well as in transcriptional and translational control. The protein is Integration host factor subunit alpha of Psychrobacter arcticus (strain DSM 17307 / VKM B-2377 / 273-4).